The following is a 375-amino-acid chain: Erythronate-4-phosphate dehydrogenase (375 aa).

Residues serine 45 and threonine 66 each coordinate substrate. The NAD(+) site is built by aspartate 146 and threonine 175. Arginine 208 is an active-site residue. Aspartate 232 is an NAD(+) binding site. The active site involves glutamate 237. Histidine 254 (proton donor) is an active-site residue. Glycine 257 is an NAD(+) binding site. Tyrosine 258 provides a ligand contact to substrate.

The protein belongs to the D-isomer specific 2-hydroxyacid dehydrogenase family. PdxB subfamily. In terms of assembly, homodimer.

The protein localises to the cytoplasm. The enzyme catalyses 4-phospho-D-erythronate + NAD(+) = (R)-3-hydroxy-2-oxo-4-phosphooxybutanoate + NADH + H(+). Its pathway is cofactor biosynthesis; pyridoxine 5'-phosphate biosynthesis; pyridoxine 5'-phosphate from D-erythrose 4-phosphate: step 2/5. Functionally, catalyzes the oxidation of erythronate-4-phosphate to 3-hydroxy-2-oxo-4-phosphonooxybutanoate. The sequence is that of Erythronate-4-phosphate dehydrogenase from Yersinia pseudotuberculosis serotype O:1b (strain IP 31758).